A 129-amino-acid chain; its full sequence is Small ribosomal subunit protein bS6 (129 aa).

Positions 103–129 (LKQKEERAERAPRREERAEAKPEAAAE) are disordered. Positions 104–129 (KQKEERAERAPRREERAEAKPEAAAE) are enriched in basic and acidic residues.

Belongs to the bacterial ribosomal protein bS6 family.

Its function is as follows. Binds together with bS18 to 16S ribosomal RNA. This chain is Small ribosomal subunit protein bS6, found in Vibrio campbellii (strain ATCC BAA-1116).